The sequence spans 239 residues: tRNA (guanine-N(7)-)-methyltransferase (239 aa).

Positions 69, 94, 121, and 144 each coordinate S-adenosyl-L-methionine. The active site involves Asp-144. Lys-148 lines the substrate pocket. Positions 150–155 are interaction with RNA; the sequence is RHNKRR. Residues Asp-180 and 217–220 contribute to the substrate site; that span reads TKFE.

The protein belongs to the class I-like SAM-binding methyltransferase superfamily. TrmB family. As to quaternary structure, monomer.

The enzyme catalyses guanosine(46) in tRNA + S-adenosyl-L-methionine = N(7)-methylguanosine(46) in tRNA + S-adenosyl-L-homocysteine. The protein operates within tRNA modification; N(7)-methylguanine-tRNA biosynthesis. Functionally, catalyzes the formation of N(7)-methylguanine at position 46 (m7G46) in tRNA. The protein is tRNA (guanine-N(7)-)-methyltransferase of Klebsiella pneumoniae subsp. pneumoniae (strain ATCC 700721 / MGH 78578).